Reading from the N-terminus, the 403-residue chain is Exodeoxyribonuclease 7 large subunit (403 aa).

This sequence belongs to the XseA family. As to quaternary structure, heterooligomer composed of large and small subunits.

The protein resides in the cytoplasm. It carries out the reaction Exonucleolytic cleavage in either 5'- to 3'- or 3'- to 5'-direction to yield nucleoside 5'-phosphates.. Bidirectionally degrades single-stranded DNA into large acid-insoluble oligonucleotides, which are then degraded further into small acid-soluble oligonucleotides. The protein is Exodeoxyribonuclease 7 large subunit of Clostridium botulinum (strain Okra / Type B1).